Here is a 187-residue protein sequence, read N- to C-terminus: Thioredoxin F, chloroplastic (187 aa).

The N-terminal 72 residues, Met1–Glu72, are a transit peptide targeting the chloroplast. The region spanning Ala73–Ser186 is the Thioredoxin domain. Active-site nucleophile residues include Cys111 and Cys114. Residues Cys111 and Cys114 are joined by a disulfide bond.

The protein belongs to the thioredoxin family. Plant F-type subfamily.

The protein resides in the plastid. The protein localises to the chloroplast. Thiol-disulfide oxidoreductase involved in the redox regulation of enzymes of both reductive pentose phosphate pathway (Calvin-Benson cycle) and oxidative pentose phosphate pathway. The protein is Thioredoxin F, chloroplastic of Oryza sativa subsp. japonica (Rice).